Here is a 93-residue protein sequence, read N- to C-terminus: Integration host factor subunit beta (93 aa).

This sequence belongs to the bacterial histone-like protein family. As to quaternary structure, heterodimer of an alpha and a beta chain.

In terms of biological role, this protein is one of the two subunits of integration host factor, a specific DNA-binding protein that functions in genetic recombination as well as in transcriptional and translational control. This chain is Integration host factor subunit beta, found in Aliivibrio salmonicida (strain LFI1238) (Vibrio salmonicida (strain LFI1238)).